The primary structure comprises 576 residues: MLKHPATKYRPFPPIALPDRTWPSKTLTRAPIWMSTDLRDGNQALFEPMNAERKMRMFKMLVQIGFKEIEAAFPAASQTDYDFVRELIEGGHIPDDVTIEVLTQAREDLIRRTMESLRGARRAIIHVYNATSPVFRRTVFNTDREGVKRIAVESAKLIREIAESMPETQWTYQYSPEVFSGTELDFALEVCNAVTEAWDPTPAHKIIFNLPATVEMATPNVYADQIEWMHRHLARRDSILLSVHPHNDRGTAVAAAELAVMAGADRVEGCLFGNGERTGNVDLVTLALNLYSQGIDPGLDFSHVNDVARTCEDCTQLPVHPRHPYVGDLVFTAFSGSHQDAIKKGFAVQKPDAIWEMPYLPIDPADVGRTYDSIIRVNSQSGKGGVAYLLESGYGIAMPRRLQVEFSSTVQQLTDASGREATAADIWALFQETYLRADGPIGYVSHRLAERDDGSQHIRLVVNIADREHVCEGVGNGPLDALVQALAAVLAAPVSIHHYEERALGQGANADAIAFAELAAPGVAGSVFGVGIDANLTTASIRAVVGGVNRLAARHAQAQPGQSLLRRGMAPSMELA.

The Pyruvate carboxyltransferase domain maps to 31–305 (PIWMSTDLRD…DPGLDFSHVN (275 aa)). Asp-40, His-244, His-246, and Asn-280 together coordinate Mg(2+). The regulatory domain stretch occupies residues 437-576 (ADGPIGYVSH…RGMAPSMELA (140 aa)).

It belongs to the alpha-IPM synthase/homocitrate synthase family. LeuA type 2 subfamily. Homodimer. It depends on Mg(2+) as a cofactor.

Its subcellular location is the cytoplasm. The catalysed reaction is 3-methyl-2-oxobutanoate + acetyl-CoA + H2O = (2S)-2-isopropylmalate + CoA + H(+). The protein operates within amino-acid biosynthesis; L-leucine biosynthesis; L-leucine from 3-methyl-2-oxobutanoate: step 1/4. In terms of biological role, catalyzes the condensation of the acetyl group of acetyl-CoA with 3-methyl-2-oxobutanoate (2-ketoisovalerate) to form 3-carboxy-3-hydroxy-4-methylpentanoate (2-isopropylmalate). This is 2-isopropylmalate synthase from Ralstonia nicotianae (strain ATCC BAA-1114 / GMI1000) (Ralstonia solanacearum).